Reading from the N-terminus, the 256-residue chain is Ciliary microtubule associated protein 1A (256 aa).

STPGR repeat units lie at residues 66 to 92, 181 to 206, and 217 to 242; these read PGPGYLVPSNITVKGKDGTPAYSIYGR, PGPGTYRVIDPGTYKHKPPQYSMTAR, and PGPGAYSPEKVVMSKAQAPNFSFGIR. Residues 91-115 are disordered; that stretch reads GRPRDISSFRTPGPGSYSPERAGKS.

The protein belongs to the CIMAP family.

It is found in the cytoplasm. The protein localises to the cytoskeleton. The protein resides in the flagellum axoneme. Its function is as follows. Outer dense fibers are filamentous structures located on the outside of the axoneme in the midpiece and principal piece of the mammalian sperm tail. May help to maintain the passive elastic structures and elastic recoil of the sperm tail. This Xenopus laevis (African clawed frog) protein is Ciliary microtubule associated protein 1A (cimap1a).